Consider the following 284-residue polypeptide: Fructosamine kinase FrlD (284 aa).

It belongs to the carbohydrate kinase PfkB family.

In terms of biological role, catalyzes the phosphorylation of a range of fructosamines to fructosamine 6-phosphates. This is Fructosamine kinase FrlD (frlD) from Bacillus subtilis (strain 168).